The following is a 179-amino-acid chain: Large ribosomal subunit protein uL6 (179 aa).

It belongs to the universal ribosomal protein uL6 family. Part of the 50S ribosomal subunit.

Its function is as follows. This protein binds to the 23S rRNA, and is important in its secondary structure. It is located near the subunit interface in the base of the L7/L12 stalk, and near the tRNA binding site of the peptidyltransferase center. This chain is Large ribosomal subunit protein uL6, found in Synechococcus sp. (strain WH7803).